A 457-amino-acid chain; its full sequence is Cell division protein FtsA (457 aa).

This sequence belongs to the FtsA/MreB family. Self-interacts. Interacts with FtsZ.

It is found in the cell membrane. Its function is as follows. Cell division protein that is involved in the assembly of the Z ring. May serve as a membrane anchor for the Z ring. Increased expression restores growth to a PBP2b (penA) deletion strain as well as mreCD and rodA deletions, but not gpsB or rodZ deletions. Does not restore wild-type cell morphology to the penA deletion. In Streptococcus pneumoniae serotype 2 (strain D39 / NCTC 7466), this protein is Cell division protein FtsA.